Consider the following 323-residue polypeptide: MKKEELRLIFMGTADFAVPALRALVENGYQVKAVVTMPDKPMGRGHKVSPSMVKLYAQELGLPILQPDNLNEESFLDELRTYQPHLQIVVAFRMLPRSVWQMPPMGTINLHGSLLPMYRGAAPINHAIRHGDTETGVTTFRLRHEIDTGEVLLQEKLPIGHEETFGELYERMATLGASVLVHTVDLFLEGEPVSIPQEQLPGYVDARPAPKIFKDDCRIDWDKPAEEVHNFIRSISPAPTAWTKLHRPRMESIVLKIYRTQVIEREPRHRGRFGSIIWDKKNLDVMTRKGVIRILSLQMPGKKQMDAASFLNGFALSSDMYIE.

113-116 contacts (6S)-5,6,7,8-tetrahydrofolate; it reads SLLP.

Belongs to the Fmt family.

The enzyme catalyses L-methionyl-tRNA(fMet) + (6R)-10-formyltetrahydrofolate = N-formyl-L-methionyl-tRNA(fMet) + (6S)-5,6,7,8-tetrahydrofolate + H(+). Attaches a formyl group to the free amino group of methionyl-tRNA(fMet). The formyl group appears to play a dual role in the initiator identity of N-formylmethionyl-tRNA by promoting its recognition by IF2 and preventing the misappropriation of this tRNA by the elongation apparatus. This is Methionyl-tRNA formyltransferase from Porphyromonas gingivalis (strain ATCC BAA-308 / W83).